The primary structure comprises 110 residues: Protein P2 (110 aa).

Positions 72–82 (KLPTTSGSSSA) are enriched in polar residues. Residues 72–110 (KLPTTSGSSSAGAIVPAGSNTQGQYKAPPKKGIKRKYPA) are disordered. Basic residues predominate over residues 99–110 (PPKKGIKRKYPA).

In Oryza sativa (Rice), this protein is Protein P2.